Here is a 448-residue protein sequence, read N- to C-terminus: UDP-N-acetylmuramoylalanine--D-glutamate ligase (448 aa).

116-122 (GSNAKST) serves as a coordination point for ATP.

This sequence belongs to the MurCDEF family.

The protein localises to the cytoplasm. The catalysed reaction is UDP-N-acetyl-alpha-D-muramoyl-L-alanine + D-glutamate + ATP = UDP-N-acetyl-alpha-D-muramoyl-L-alanyl-D-glutamate + ADP + phosphate + H(+). It functions in the pathway cell wall biogenesis; peptidoglycan biosynthesis. In terms of biological role, cell wall formation. Catalyzes the addition of glutamate to the nucleotide precursor UDP-N-acetylmuramoyl-L-alanine (UMA). This is UDP-N-acetylmuramoylalanine--D-glutamate ligase from Pseudomonas syringae pv. syringae (strain B728a).